The chain runs to 337 residues: tRNA N6-adenosine threonylcarbamoyltransferase (337 aa).

Fe cation contacts are provided by histidine 111 and histidine 115. Substrate contacts are provided by residues 134–138, aspartate 167, glycine 180, and asparagine 272; that span reads LVSGG. Residue aspartate 300 coordinates Fe cation.

The protein belongs to the KAE1 / TsaD family. It depends on Fe(2+) as a cofactor.

It localises to the cytoplasm. The enzyme catalyses L-threonylcarbamoyladenylate + adenosine(37) in tRNA = N(6)-L-threonylcarbamoyladenosine(37) in tRNA + AMP + H(+). Functionally, required for the formation of a threonylcarbamoyl group on adenosine at position 37 (t(6)A37) in tRNAs that read codons beginning with adenine. Is involved in the transfer of the threonylcarbamoyl moiety of threonylcarbamoyl-AMP (TC-AMP) to the N6 group of A37, together with TsaE and TsaB. TsaD likely plays a direct catalytic role in this reaction. The protein is tRNA N6-adenosine threonylcarbamoyltransferase of Cronobacter sakazakii (strain ATCC BAA-894) (Enterobacter sakazakii).